The chain runs to 176 residues: Shikimate kinase (176 aa).

Residue 14–19 (GAGKSS) coordinates ATP. S18 contributes to the Mg(2+) binding site. Substrate contacts are provided by D36, R60, and G82. ATP is bound at residue R120. R138 contacts substrate.

The protein belongs to the shikimate kinase family. As to quaternary structure, monomer. Mg(2+) serves as cofactor.

The protein localises to the cytoplasm. It catalyses the reaction shikimate + ATP = 3-phosphoshikimate + ADP + H(+). Its pathway is metabolic intermediate biosynthesis; chorismate biosynthesis; chorismate from D-erythrose 4-phosphate and phosphoenolpyruvate: step 5/7. Its function is as follows. Catalyzes the specific phosphorylation of the 3-hydroxyl group of shikimic acid using ATP as a cosubstrate. The polypeptide is Shikimate kinase (Dehalococcoides mccartyi (strain ATCC BAA-2100 / JCM 16839 / KCTC 5957 / BAV1)).